Consider the following 332-residue polypeptide: F-box/SPRY domain-containing protein 1 (332 aa).

Acidic residues predominate over residues 1-10 (MTENNEETIV). The disordered stretch occupies residues 1-81 (MTENNEETIV…RRSPRRPEVS (81 aa)). The segment covering 15–24 (CNLTSSTPMK) has biased composition (polar residues). The 49-residue stretch at 79-127 (EVSASRLPLKVLNQIFQYLSLKDLRSAMLTCHSWNNALSMEDSDIWQQL) folds into the F-box domain. Positions 138-330 (SDPFLFVELR…VTMVYVGSPQ (193 aa)) constitute a B30.2/SPRY domain.

It belongs to the FBXO45/Fsn family. In terms of assembly, component of an SCF (SKP1-CUL1-F-box protein) E3 ubiquitin ligase complex composed of cul-1, fsn-1, rpm-1 and skr-1. Interacts (via SPRY domain) with scd-2 (via cytoplasmic domain). Interacts (via SPRY domain) with convertase egl-3 (via C-terminus).

The protein localises to the synapse. It functions in the pathway protein modification; protein ubiquitination. Functionally, component of a SCF (SKP1-CUL1-F-box protein) E3 ubiquitin ligase complex which is required for the restriction and/or maturation of synapses in GABAergic neuromuscular junction (NMJ) presynaptic neurons. Promotes NRJ synapse development and synaptic transmission by negatively regulating the daf-2/InsR pathway in muscles. By targeting convertase egl-3 for degradation, negatively modulates insulin-like protein ins-4 and ins-6 processing. May stabilize synapse formation by promoting the down-regulation of scd-2. Regulates axon termination in PLM and ALM neurons. The chain is F-box/SPRY domain-containing protein 1 (fsn-1) from Caenorhabditis briggsae.